The chain runs to 106 residues: uncharacterized protein (106 aa).

This is an uncharacterized protein from Haemophilus influenzae (strain ATCC 51907 / DSM 11121 / KW20 / Rd).